A 431-amino-acid polypeptide reads, in one-letter code: Serine/threonine-protein kinase Sgk1 (431 aa).

Residues 1-60 (MTVKTEAAKGTLTYSRMRGMVAILIAFMKQRRMGLNDFIQKIANNSYACKHPEVQSILKI) are necessary for localization to the mitochondria. The tract at residues 66-92 (PELMNANPSPPPSPSQQINLGPSSNPH) is disordered. Serine 74 is subject to Phosphoserine. Position 78 is a phosphoserine; by MAPK7 (serine 78). Positions 81–91 (QQINLGPSSNP) are enriched in polar residues. Positions 98 to 355 (FHFLKVIGKG…FMEIKSHVFF (258 aa)) constitute a Protein kinase domain. ATP contacts are provided by residues 104–112 (IGKGSFGKV) and lysine 127. A Nuclear localization signal motif is present at residues 131 to 141 (KKAILKKKEEK). Residue aspartate 222 is the Proton acceptor of the active site. Threonine 256 carries the post-translational modification Phosphothreonine; by PDPK1. Positions 356 to 431 (SLINWDDLIN…SYAPPTDSFL (76 aa)) constitute an AGC-kinase C-terminal domain. Threonine 369 is modified (phosphothreonine; by PKA). Phosphoserine is present on residues serine 397, serine 401, and serine 422.

This sequence belongs to the protein kinase superfamily. AGC Ser/Thr protein kinase family. Homodimer; disulfide-linked. Forms a trimeric complex with FBXW7 and NOTCH1. Interacts with MAPK3/ERK1, MAPK1/ERK2, MAP2K1/MEK1, MAP2K2/MEK2, NEDD4, NEDD4L, MAPT/TAU, MAPK7, CREB1, SLC9A3R2/NHERF2 and KCNJ1/ROMK1. Associates with the mammalian target of rapamycin complex 2 (mTORC2) via an interaction with MAPKAP1/SIN1. Regulated by phosphorylation. Activated by phosphorylation on Ser-422 by mTORC2, transforming it into a substrate for PDPK1 which phosphorylates it on Thr-256. Phosphorylation on Ser-397 and Ser-401 are also essential for its activity. Phosphorylation on Ser-78 by MAPK7 is required for growth factor-induced cell cycle progression. Post-translationally, ubiquitinated by NEDD4L; which promotes proteasomal degradation. Ubiquitinated by SYVN1 at the endoplasmic reticulum; which promotes rapid proteasomal degradation and maintains a high turnover rate in resting cells.

It is found in the cytoplasm. It localises to the nucleus. Its subcellular location is the endoplasmic reticulum membrane. The protein resides in the cell membrane. The protein localises to the mitochondrion. The enzyme catalyses L-seryl-[protein] + ATP = O-phospho-L-seryl-[protein] + ADP + H(+). The catalysed reaction is L-threonyl-[protein] + ATP = O-phospho-L-threonyl-[protein] + ADP + H(+). With respect to regulation, two specific sites, one in the kinase domain (Thr-256) and the other in the C-terminal regulatory region (Ser-422), need to be phosphorylated for its full activation. Phosphorylation at Ser-397 and Ser-401 are also essential for its activity. Activated by WNK1, WNK2, WNK3 and WNK4; which promote phosphorylation by mTORC2. Its function is as follows. Serine/threonine-protein kinase which is involved in the regulation of a wide variety of ion channels, membrane transporters, cellular enzymes, transcription factors, neuronal excitability, cell growth, proliferation, survival, migration and apoptosis. Plays an important role in cellular stress response. Contributes to regulation of renal Na(+) retention, renal K(+) elimination, salt appetite, gastric acid secretion, intestinal Na(+)/H(+) exchange and nutrient transport, insulin-dependent salt sensitivity of blood pressure, salt sensitivity of peripheral glucose uptake, cardiac repolarization and memory consolidation. Up-regulates Na(+) channels: SCNN1A/ENAC, SCN5A and ASIC1/ACCN2, K(+) channels: KCNJ1/ROMK1, KCNA1-5, KCNQ1-5 and KCNE1, epithelial Ca(2+) channels: TRPV5 and TRPV6, chloride channels: BSND, CLCN2 and CFTR, glutamate transporters: SLC1A3/EAAT1, SLC1A2 /EAAT2, SLC1A1/EAAT3, SLC1A6/EAAT4 and SLC1A7/EAAT5, amino acid transporters: SLC1A5/ASCT2, SLC38A1/SN1 and SLC6A19, creatine transporter: SLC6A8, Na(+)/dicarboxylate cotransporter: SLC13A2/NADC1, Na(+)-dependent phosphate cotransporter: SLC34A2/NAPI-2B, glutamate receptor: GRIK2/GLUR6. Up-regulates carriers: SLC9A3/NHE3, SLC12A1/NKCC2, SLC12A3/NCC, SLC5A3/SMIT, SLC2A1/GLUT1, SLC5A1/SGLT1 and SLC15A2/PEPT2. Regulates enzymes: GSK3A/B, PMM2 and Na(+)/K(+) ATPase, and transcription factors: CTNNB1 and nuclear factor NF-kappa-B. Stimulates sodium transport into epithelial cells by enhancing the stability and expression of SCNN1A/ENAC. This is achieved by phosphorylating the NEDD4L ubiquitin E3 ligase, promoting its interaction with 14-3-3 proteins, thereby preventing it from binding to SCNN1A/ENAC and targeting it for degradation. Regulates store-operated Ca(+2) entry (SOCE) by stimulating ORAI1 and STIM1. Regulates KCNJ1/ROMK1 directly via its phosphorylation or indirectly via increased interaction with SLC9A3R2/NHERF2. Phosphorylates MDM2 and activates MDM2-dependent ubiquitination of p53/TP53. Phosphorylates MAPT/TAU and mediates microtubule depolymerization and neurite formation in hippocampal neurons. Phosphorylates SLC2A4/GLUT4 and up-regulates its activity. Phosphorylates APBB1/FE65 and promotes its localization to the nucleus. Phosphorylates MAPK1/ERK2 and activates it by enhancing its interaction with MAP2K1/MEK1 and MAP2K2/MEK2. Phosphorylates FBXW7 and plays an inhibitory role in the NOTCH1 signaling. Phosphorylates FOXO1 resulting in its relocalization from the nucleus to the cytoplasm. Phosphorylates FOXO3, promoting its exit from the nucleus and interference with FOXO3-dependent transcription. Phosphorylates BRAF and MAP3K3/MEKK3 and inhibits their activity. Phosphorylates SLC9A3/NHE3 in response to dexamethasone, resulting in its activation and increased localization at the cell membrane. Phosphorylates CREB1. Necessary for vascular remodeling during angiogenesis. The polypeptide is Serine/threonine-protein kinase Sgk1 (SGK1) (Macaca fascicularis (Crab-eating macaque)).